We begin with the raw amino-acid sequence, 368 residues long: tRNA 2-selenouridine synthase (368 aa).

In terms of domain architecture, Rhodanese spans 15–138; the sequence is MLSGHPMIDV…MRQYLIEVID (124 aa). C98 acts as the S-selanylcysteine intermediate in catalysis.

The protein belongs to the SelU family. As to quaternary structure, monomer.

It catalyses the reaction 5-methylaminomethyl-2-thiouridine(34) in tRNA + selenophosphate + (2E)-geranyl diphosphate + H2O + H(+) = 5-methylaminomethyl-2-selenouridine(34) in tRNA + (2E)-thiogeraniol + phosphate + diphosphate. The enzyme catalyses 5-methylaminomethyl-2-thiouridine(34) in tRNA + (2E)-geranyl diphosphate = 5-methylaminomethyl-S-(2E)-geranyl-thiouridine(34) in tRNA + diphosphate. It carries out the reaction 5-methylaminomethyl-S-(2E)-geranyl-thiouridine(34) in tRNA + selenophosphate + H(+) = 5-methylaminomethyl-2-(Se-phospho)selenouridine(34) in tRNA + (2E)-thiogeraniol. The catalysed reaction is 5-methylaminomethyl-2-(Se-phospho)selenouridine(34) in tRNA + H2O = 5-methylaminomethyl-2-selenouridine(34) in tRNA + phosphate. Its function is as follows. Involved in the post-transcriptional modification of the uridine at the wobble position (U34) of tRNA(Lys), tRNA(Glu) and tRNA(Gln). Catalyzes the conversion of 2-thiouridine (S2U-RNA) to 2-selenouridine (Se2U-RNA). Acts in a two-step process involving geranylation of 2-thiouridine (S2U) to S-geranyl-2-thiouridine (geS2U) and subsequent selenation of the latter derivative to 2-selenouridine (Se2U) in the tRNA chain. The protein is tRNA 2-selenouridine synthase of Shewanella woodyi (strain ATCC 51908 / MS32).